Here is a 401-residue protein sequence, read N- to C-terminus: Formate dehydrogenase (401 aa).

Substrate-binding residues include Ile-123 and Asn-147. NAD(+) contacts are provided by residues Ser-148, 202–203, Asp-222, 257–261, Thr-283, Asp-309, 333–336, and Ser-381; these read RI, PLHPE, and HISG.

It belongs to the D-isomer specific 2-hydroxyacid dehydrogenase family. FDH subfamily. As to quaternary structure, homodimer.

Its subcellular location is the cytoplasm. The catalysed reaction is formate + NAD(+) = CO2 + NADH. In terms of biological role, catalyzes the NAD(+)-dependent oxidation of formate to carbon dioxide. Formate oxidation is the final step in the methanol oxidation pathway in methylotrophic microorganisms. Has a role in the detoxification of exogenous formate in non-methylotrophic organisms. This is Formate dehydrogenase from Pseudomonas sp. (strain 101) (Achromobacter parvulus T1).